A 429-amino-acid polypeptide reads, in one-letter code: Type II methyltransferase M.AgeI (429 aa).

The SAM-dependent MTase C5-type domain occupies 1–429 (MKTIDLFCGA…MAETIKVAIS (429 aa)). The active site involves C80.

This sequence belongs to the class I-like SAM-binding methyltransferase superfamily. C5-methyltransferase family.

It catalyses the reaction a 2'-deoxycytidine in DNA + S-adenosyl-L-methionine = a 5-methyl-2'-deoxycytidine in DNA + S-adenosyl-L-homocysteine + H(+). Functionally, a methylase, recognizes the double-stranded sequence 5'-ACCGGT-3', methylates C-3 on both strands, and protects the DNA from cleavage by the AgeI endonuclease. The chain is Type II methyltransferase M.AgeI (ageIM) from Thalassovita gelatinovora (Thalassobius gelatinovorus).